Reading from the N-terminus, the 135-residue chain is Large ribosomal subunit protein mL41 (135 aa).

The transit peptide at 1-13 (MGVLSALARGFVR) directs the protein to the mitochondrion.

This sequence belongs to the mitochondrion-specific ribosomal protein mL41 family. In terms of assembly, component of the mitochondrial ribosome large subunit (39S) which comprises a 16S rRNA and about 50 distinct proteins.

The protein localises to the mitochondrion. In terms of biological role, component of the mitochondrial ribosome large subunit. Also involved in apoptosis and cell cycle. This chain is Large ribosomal subunit protein mL41 (mrpl41), found in Danio rerio (Zebrafish).